Reading from the N-terminus, the 79-residue chain is UPF0180 protein BCG9842_B3897 (79 aa).

This sequence belongs to the UPF0180 family.

This is UPF0180 protein BCG9842_B3897 from Bacillus cereus (strain G9842).